Consider the following 475-residue polypeptide: 3-isopropylmalate dehydratase large subunit (475 aa).

Positions 352, 413, and 416 each coordinate [4Fe-4S] cluster.

The protein belongs to the aconitase/IPM isomerase family. LeuC type 1 subfamily. Heterodimer of LeuC and LeuD. The cofactor is [4Fe-4S] cluster.

The catalysed reaction is (2R,3S)-3-isopropylmalate = (2S)-2-isopropylmalate. It functions in the pathway amino-acid biosynthesis; L-leucine biosynthesis; L-leucine from 3-methyl-2-oxobutanoate: step 2/4. In terms of biological role, catalyzes the isomerization between 2-isopropylmalate and 3-isopropylmalate, via the formation of 2-isopropylmaleate. The sequence is that of 3-isopropylmalate dehydratase large subunit from Pseudomonas syringae pv. tomato (strain ATCC BAA-871 / DC3000).